The chain runs to 946 residues: Protein dct-6 (946 aa).

A coiled-coil region spans residues 326–363 (YMDMNDQIEQMIALLVDQLEELEKLEQLCDEVQKTGNQ).

Its function is as follows. May have a role in tumor suppression. The sequence is that of Protein dct-6 from Caenorhabditis briggsae.